Consider the following 263-residue polypeptide: Calpain small subunit 1 (263 aa).

Residue methionine 1 is modified to N-acetylmethionine. Serine 6 is modified (phosphoserine). One can recognise an EF-hand 1; atypical domain in the interval 91 to 125 (EEVRQFRRLFAQLAGDDMEVSATELMNILNKVVTR). Ca(2+) contacts are provided by alanine 104, aspartate 107, glutamate 109, glutamate 114, aspartate 132, aspartate 147, aspartate 149, threonine 151, lysine 153, and glutamate 158. EF-hand domains lie at 134–167 (FGID…NNIK), 164–199 (NNIK…AGFR), 200–228 (LNEH…ISCL), and 229–263 (VRLD…TMYS). An N6-acetyllysine modification is found at lysine 174. Ca(2+)-binding residues include aspartate 177, aspartate 179, serine 181, threonine 183, glutamate 188, and aspartate 220.

Homodimer or heterodimer of a large (catalytic) and a small (regulatory) subunit. In presence of calcium, the heterodimer dissociates.

The protein localises to the cytoplasm. It localises to the cell membrane. Functionally, regulatory subunit of the calcium-regulated non-lysosomal thiol-protease which catalyzes limited proteolysis of substrates involved in cytoskeletal remodeling and signal transduction. Essential for embryonic development. This is Calpain small subunit 1 (CAPNS1) from Bos taurus (Bovine).